The sequence spans 135 residues: uncharacterized protein (135 aa).

This is an uncharacterized protein from Schizosaccharomyces pombe (strain 972 / ATCC 24843) (Fission yeast).